Consider the following 125-residue polypeptide: MTYDFRAEIVKAKNTGSAKSGSHHWLLQRITAIILVLCSLWLLYFTLANKNSDVNIIIWELKRPINLIPLLIAVITSLYHAMLGMQVVIEDYISCNKLRNTLIIAVKLFSILTIVAFIVAVFYRG.

At 1-24 the chain is on the cytoplasmic side; that stretch reads MTYDFRAEIVKAKNTGSAKSGSHH. Residues 25-45 form a helical membrane-spanning segment; the sequence is WLLQRITAIILVLCSLWLLYF. Over 46 to 67 the chain is Periplasmic; that stretch reads TLANKNSDVNIIIWELKRPINL. A helical membrane pass occupies residues 68 to 89; sequence IPLLIAVITSLYHAMLGMQVVI. H80 contacts heme. At 90-99 the chain is on the cytoplasmic side; the sequence is EDYISCNKLR. Y92 lines the a ubiquinone pocket. The chain crosses the membrane as a helical span at residues 100–123; the sequence is NTLIIAVKLFSILTIVAFIVAVFY.

As to quaternary structure, part of an enzyme complex containing four subunits: a flavoprotein, an iron-sulfur protein, plus two membrane-anchoring proteins, SdhC and SdhD. Heme serves as cofactor.

It is found in the cell inner membrane. It functions in the pathway carbohydrate metabolism; tricarboxylic acid cycle. Functionally, membrane-anchoring subunit of succinate dehydrogenase (SDH). The protein is Succinate dehydrogenase hydrophobic membrane anchor subunit (sdhD) of Rickettsia bellii (strain RML369-C).